The sequence spans 335 residues: Thioredoxin-related transmembrane protein 4 (335 aa).

Positions 1–20 (MTGGFCVPVLLAAWLAAAAA) are cleaved as a signal peptide. Residues 26 to 133 (AALPAEESRV…YEDLQNYILE (108 aa)) form the Thioredoxin domain. Catalysis depends on nucleophile residues Cys-60 and Cys-63. Cys-60 and Cys-63 form a disulfide bridge. A helical membrane pass occupies residues 186 to 206 (VFFVIATLVFGLFMGLILVVI). Residues 222–316 (CEQEQSTGEA…EDGAHPADTQ (95 aa)) form a disordered region. Over residues 238–280 (QDAEEEKDDSNEEENKDSLVDDEEEKEDIGDEDEGEEDEEEDN) the composition is skewed to acidic residues. Phosphoserine occurs at positions 247 and 255. The segment covering 286 to 298 (AEERSDTNERAVV) has biased composition (basic and acidic residues).

It localises to the nucleus inner membrane. It is found in the endoplasmic reticulum membrane. The sequence is that of Thioredoxin-related transmembrane protein 4 (Tmx4) from Mus musculus (Mouse).